Here is a 34-residue protein sequence, read N- to C-terminus: Photosystem II reaction center protein M (34 aa).

The helical transmembrane segment at 5 to 25 threads the bilayer; sequence ILAFIATALFILVPTAFLLII.

Belongs to the PsbM family. PSII is composed of 1 copy each of membrane proteins PsbA, PsbB, PsbC, PsbD, PsbE, PsbF, PsbH, PsbI, PsbJ, PsbK, PsbL, PsbM, PsbT, PsbX, PsbY, PsbZ, Psb30/Ycf12, at least 3 peripheral proteins of the oxygen-evolving complex and a large number of cofactors. It forms dimeric complexes.

It is found in the plastid. The protein localises to the chloroplast thylakoid membrane. One of the components of the core complex of photosystem II (PSII). PSII is a light-driven water:plastoquinone oxidoreductase that uses light energy to abstract electrons from H(2)O, generating O(2) and a proton gradient subsequently used for ATP formation. It consists of a core antenna complex that captures photons, and an electron transfer chain that converts photonic excitation into a charge separation. This subunit is found at the monomer-monomer interface. This chain is Photosystem II reaction center protein M, found in Buxus microphylla (Littleleaf boxwood).